Reading from the N-terminus, the 489-residue chain is Adenosylhomocysteinase (489 aa).

Residues Thr68, Asp151, and Glu213 each coordinate substrate. 214-216 is a binding site for NAD(+); it reads TTT. Residues Lys243 and Asp247 each coordinate substrate. NAD(+)-binding positions include Asn248, 277-282, Glu300, Asn335, 356-358, and Asn403; these read GYGDVG and IGH.

This sequence belongs to the adenosylhomocysteinase family. Requires NAD(+) as cofactor.

Its subcellular location is the cytoplasm. It catalyses the reaction S-adenosyl-L-homocysteine + H2O = L-homocysteine + adenosine. Its pathway is amino-acid biosynthesis; L-homocysteine biosynthesis; L-homocysteine from S-adenosyl-L-homocysteine: step 1/1. May play a key role in the regulation of the intracellular concentration of adenosylhomocysteine. This is Adenosylhomocysteinase from Mycobacterium sp. (strain KMS).